The chain runs to 182 residues: ATP synthase subunit delta, organellar chromatophore (182 aa).

The protein belongs to the ATPase delta chain family. F-type ATPases have 2 components, F(1) - the catalytic core - and F(0) - the membrane proton channel. F(1) has five subunits: alpha(3), beta(3), gamma(1), delta(1), epsilon(1). CF(0) has four main subunits: a(1), b(1), b'(1) and c(10-14). The alpha and beta chains form an alternating ring which encloses part of the gamma chain. F(1) is attached to F(0) by a central stalk formed by the gamma and epsilon chains, while a peripheral stalk is formed by the delta, b and b' chains.

The protein resides in the plastid. It is found in the organellar chromatophore thylakoid membrane. Functionally, f(1)F(0) ATP synthase produces ATP from ADP in the presence of a proton or sodium gradient. F-type ATPases consist of two structural domains, F(1) containing the extramembraneous catalytic core and F(0) containing the membrane proton channel, linked together by a central stalk and a peripheral stalk. During catalysis, ATP synthesis in the catalytic domain of F(1) is coupled via a rotary mechanism of the central stalk subunits to proton translocation. This protein is part of the stalk that links CF(0) to CF(1). It either transmits conformational changes from CF(0) to CF(1) or is implicated in proton conduction. The sequence is that of ATP synthase subunit delta, organellar chromatophore from Paulinella chromatophora.